The sequence spans 205 residues: Probable GTP-binding protein EngB (205 aa).

Residues 27 to 201 enclose the EngB-type G domain; the sequence is SGIEIAFAGR…AAKLDSWFAP (175 aa). GTP contacts are provided by residues 35–42, 62–66, 80–83, 147–150, and 180–182; these read GRSNAGKS, GRTQL, DLPG, TKAD, and FSA. The Mg(2+) site is built by Ser-42 and Thr-64.

This sequence belongs to the TRAFAC class TrmE-Era-EngA-EngB-Septin-like GTPase superfamily. EngB GTPase family. The cofactor is Mg(2+).

Necessary for normal cell division and for the maintenance of normal septation. The sequence is that of Probable GTP-binding protein EngB from Pasteurella multocida (strain Pm70).